The primary structure comprises 344 residues: DNA-directed RNA polymerase subunit alpha (344 aa).

The interval 1 to 239 (MADHWNKLTR…DQLQSFISFD (239 aa)) is alpha N-terminal domain (alpha-NTD). Residues 254–344 (VLPYDHNLLR…ENLSKQYSED (91 aa)) form an alpha C-terminal domain (alpha-CTD) region.

This sequence belongs to the RNA polymerase alpha chain family. Homodimer. The RNAP catalytic core consists of 2 alpha, 1 beta, 1 beta' and 1 omega subunit. When a sigma factor is associated with the core the holoenzyme is formed, which can initiate transcription.

It catalyses the reaction RNA(n) + a ribonucleoside 5'-triphosphate = RNA(n+1) + diphosphate. Its function is as follows. DNA-dependent RNA polymerase catalyzes the transcription of DNA into RNA using the four ribonucleoside triphosphates as substrates. The polypeptide is DNA-directed RNA polymerase subunit alpha (Anaplasma phagocytophilum (strain HZ)).